A 942-amino-acid polypeptide reads, in one-letter code: UvrABC system protein A (942 aa).

32-39 (GLSGSGKS) is a binding site for ATP. A C4-type zinc finger spans residues 251–278 (CPVCGFTVPELEPRLFSFNAPFGSCPTC). ABC transporter domains follow at residues 308-589 (WNPI…KKSI) and 609-937 (GNGR…HYLK). Residue 641 to 648 (GVSGSGKS) coordinates ATP. Residues 740–766 (CEACSGDGIIKIEMHFLPDVYVPCEVC) form a C4-type zinc finger.

The protein belongs to the ABC transporter superfamily. UvrA family. In terms of assembly, forms a heterotetramer with UvrB during the search for lesions.

Its subcellular location is the cytoplasm. In terms of biological role, the UvrABC repair system catalyzes the recognition and processing of DNA lesions. UvrA is an ATPase and a DNA-binding protein. A damage recognition complex composed of 2 UvrA and 2 UvrB subunits scans DNA for abnormalities. When the presence of a lesion has been verified by UvrB, the UvrA molecules dissociate. The protein is UvrABC system protein A of Streptococcus pyogenes serotype M3 (strain ATCC BAA-595 / MGAS315).